A 38-amino-acid chain; its full sequence is Cytochrome b559 subunit beta (38 aa).

The helical transmembrane segment at 13 to 29 (WLAVHALAVPTVFFLGS) threads the bilayer. H17 provides a ligand contact to heme.

This sequence belongs to the PsbE/PsbF family. In terms of assembly, heterodimer of an alpha subunit and a beta subunit. PSII is composed of 1 copy each of membrane proteins PsbA, PsbB, PsbC, PsbD, PsbE, PsbF, PsbH, PsbI, PsbJ, PsbK, PsbL, PsbM, PsbT, PsbX, PsbY, PsbZ, Psb30/Ycf12, at least 3 peripheral proteins of the oxygen-evolving complex and a large number of cofactors. It forms dimeric complexes. Requires heme b as cofactor.

The protein localises to the plastid. Its subcellular location is the chloroplast thylakoid membrane. Functionally, this b-type cytochrome is tightly associated with the reaction center of photosystem II (PSII). PSII is a light-driven water:plastoquinone oxidoreductase that uses light energy to abstract electrons from H(2)O, generating O(2) and a proton gradient subsequently used for ATP formation. It consists of a core antenna complex that captures photons, and an electron transfer chain that converts photonic excitation into a charge separation. The sequence is that of Cytochrome b559 subunit beta from Ostreococcus tauri.